Reading from the N-terminus, the 225-residue chain is Uracil-DNA glycosylase 1 (225 aa).

The active-site Proton acceptor is Asp-68.

This sequence belongs to the uracil-DNA glycosylase (UDG) superfamily. UNG family.

The protein resides in the cytoplasm. It catalyses the reaction Hydrolyzes single-stranded DNA or mismatched double-stranded DNA and polynucleotides, releasing free uracil.. In terms of biological role, excises uracil residues from the DNA which can arise as a result of misincorporation of dUMP residues by DNA polymerase or due to deamination of cytosine. The sequence is that of Uracil-DNA glycosylase 1 (ung1) from Streptomyces coelicolor (strain ATCC BAA-471 / A3(2) / M145).